A 278-amino-acid polypeptide reads, in one-letter code: HCLS1-associated protein X-1 (278 aa).

Position 2 is an N-acetylserine (S2). The tract at residues 2 to 43 is required for localization in mitochondria; sequence SVFDLFRGFFGFPGPRSHRDPFFGGMTRDDDDDEDDEEEEDS. Disordered regions lie at residues 15–50 and 99–262; these read GPRS…GRES and LPSH…ALDD. Residues 30–43 are compositionally biased toward acidic residues; that stretch reads DDDDDEDDEEEEDS. Residues 113–278 are involved in HCLS1 binding; sequence TPGVRLREGQ…LLLGRWFRSR (166 aa). A compositionally biased stretch (basic and acidic residues) spans 132 to 152; the sequence is PDSHQPRIFEGVLESHAKPES. The segment at 174 to 205 is involved in CASP9 binding; it reads VSPHSRAREDKDLDSQVSQEGLGPLLQPQPKS. The tract at residues 175-246 is involved in GNA13 binding; it reads SPHSRAREDK…TTVTHQEAHD (72 aa). The interval 182 to 278 is required for localization in sarcoplasmic reticulum; that stretch reads EDKDLDSQVS…LLLGRWFRSR (97 aa). Residues 183–278 form an involved in PKD2 binding region; it reads DKDLDSQVSQ…LLLGRWFRSR (96 aa). Phosphoserine is present on residues S188 and S191. Residues 202–224 are involved in PLN binding; the sequence is QPKSYFKSISVTKITKPDGTVEE. Positions 202–244 are involved in ATP2A2 binding; it reads QPKSYFKSISVTKITKPDGTVEEHRTVVDSEGRRETTVTHQEA. Residues 209-278 are mediates interaction with UCP3; it reads SISVTKITKP…LLLGRWFRSR (70 aa). The segment covering 216-254 has biased composition (basic and acidic residues); sequence TKPDGTVEEHRTVVDSEGRRETTVTHQEAHDSSRSDPDP. Residues 269–278 form a required for ITGB6 binding region; it reads LLLGRWFRSR.

This sequence belongs to the HAX1 family. As to quaternary structure, interacts with ABCB1, ABCB4 and ABCB11. Directly associates with HCLS1/HS1, through binding to its N-terminal region. Interacts with CTTN. Interacts with PKD2. Interacts with GNA13. Interacts with CASP9. Interacts with ITGB6. Interacts with PLN and ATP2A2; these interactions are inhibited by calcium. Interacts with GRB7. Interacts (via C-terminus) with XIAP/BIRC4 (via BIR 2 domain and BIR 3 domain) and this interaction blocks ubiquitination of XIAP/BIRC4. Interacts with TPC2. Interacts with KCNC3. Interacts with XPO1. Interacts with RNF217. Interacts with UCP3; the interaction is direct and calcium-dependent. Interacts with MAPRE2; this interaction regulates cell migration in keratinocytes. In terms of tissue distribution, present in striated muscles (at protein level).

It localises to the mitochondrion matrix. The protein localises to the endoplasmic reticulum. It is found in the nucleus membrane. Its subcellular location is the cytoplasmic vesicle. The protein resides in the cytoplasm. It localises to the cell cortex. The protein localises to the cell membrane. It is found in the sarcoplasmic reticulum. Its subcellular location is the P-body. The protein resides in the nucleus. Its function is as follows. Recruits the Arp2/3 complex to the cell cortex and regulates reorganization of the cortical actin cytoskeleton via its interaction with KCNC3 and the Arp2/3 complex. Slows down the rate of inactivation of KCNC3 channels. Promotes GNA13-mediated cell migration. Involved in the clathrin-mediated endocytosis pathway. May be involved in internalization of ABC transporters such as ABCB11. May inhibit CASP9 and CASP3. Promotes cell survival. May regulate intracellular calcium pools. The chain is HCLS1-associated protein X-1 (Hax1) from Rattus norvegicus (Rat).